A 414-amino-acid polypeptide reads, in one-letter code: Nuclear hormone receptor family member nhr-213 (414 aa).

The segment at residues 21–99 (IVLCKVCALS…LGMTPENVQF (79 aa)) is a DNA-binding region (nuclear receptor). NR C4-type zinc fingers lie at residues 24 to 44 (CKVC…CRAC) and 62 to 82 (CKKG…CRLC). One can recognise an NR LBD domain in the interval 162–414 (SAAKKMNSLE…DFSDPDIFDC (253 aa)).

Belongs to the nuclear hormone receptor family.

Its subcellular location is the nucleus. Orphan nuclear receptor. This Caenorhabditis elegans protein is Nuclear hormone receptor family member nhr-213 (nhr-213).